Consider the following 355-residue polypeptide: uncharacterized protein (355 aa).

Positions 1–61 (MNKKIEKNNN…PKRRGRRPKK (61 aa)) are disordered. The segment covering 18-37 (YESNTTDNQLIMKKNANSGS) has biased composition (polar residues).

This is an uncharacterized protein from Acanthamoeba polyphaga mimivirus (APMV).